The chain runs to 391 residues: Putative B3 domain-containing protein Os08g0325100 (391 aa).

A DNA-binding region (TF-B3) is located at residues 32 to 125 (GDFQHEIRGE…QFDVIIFDQV (94 aa)). Residues 143–232 (VQEGRTDATE…SSRAHPQPMP (90 aa)) are disordered. Over residues 172–226 (EGRTNATETLNSSRAHSQPMPMQTPATETLNSSRAHSQDMPMQSPATETLNSSRA) the composition is skewed to polar residues.

The protein localises to the nucleus. The sequence is that of Putative B3 domain-containing protein Os08g0325100 from Oryza sativa subsp. japonica (Rice).